Consider the following 603-residue polypeptide: Probable potassium transport system protein Kup (603 aa).

12 helical membrane passes run 15-35 (GLVF…IFLL), 43-63 (IIGV…VEYA), 94-114 (VAFV…DGVI), 135-155 (NIGQ…LFSV), 163-183 (ITWV…FSGI), 209-229 (GIIG…GEAL), 244-264 (AWRF…AFLI), 283-303 (ILYI…SQAM), 336-356 (IYIS…MLIF), 365-385 (AYGL…TSIF), 390-410 (NITK…FLLS), and 415-435 (IPHG…LILI).

Belongs to the HAK/KUP transporter (TC 2.A.72) family.

The protein resides in the cell membrane. It carries out the reaction K(+)(in) + H(+)(in) = K(+)(out) + H(+)(out). Functionally, transport of potassium into the cell. Likely operates as a K(+):H(+) symporter. This Methanosarcina barkeri (strain Fusaro / DSM 804) protein is Probable potassium transport system protein Kup.